Consider the following 340-residue polypeptide: Ribosomal RNA large subunit methyltransferase F (340 aa).

This sequence belongs to the methyltransferase superfamily. METTL16/RlmF family.

Its subcellular location is the cytoplasm. It carries out the reaction adenosine(1618) in 23S rRNA + S-adenosyl-L-methionine = N(6)-methyladenosine(1618) in 23S rRNA + S-adenosyl-L-homocysteine + H(+). Functionally, specifically methylates the adenine in position 1618 of 23S rRNA. This is Ribosomal RNA large subunit methyltransferase F from Dechloromonas aromatica (strain RCB).